The following is a 267-amino-acid chain: 5'-nucleotidase SurE (267 aa).

Asp-9, Asp-10, Ser-40, and Asn-97 together coordinate a divalent metal cation.

This sequence belongs to the SurE nucleotidase family. Requires a divalent metal cation as cofactor.

It localises to the cytoplasm. The catalysed reaction is a ribonucleoside 5'-phosphate + H2O = a ribonucleoside + phosphate. In terms of biological role, nucleotidase that shows phosphatase activity on nucleoside 5'-monophosphates. This chain is 5'-nucleotidase SurE, found in Helicobacter pylori (strain G27).